Here is a 231-residue protein sequence, read N- to C-terminus: Large ribosomal subunit protein uL1 (231 aa).

This sequence belongs to the universal ribosomal protein uL1 family. In terms of assembly, part of the 50S ribosomal subunit.

Its function is as follows. Binds directly to 23S rRNA. The L1 stalk is quite mobile in the ribosome, and is involved in E site tRNA release. Protein L1 is also a translational repressor protein, it controls the translation of the L11 operon by binding to its mRNA. The chain is Large ribosomal subunit protein uL1 from Mycoplasmopsis synoviae (strain 53) (Mycoplasma synoviae).